The primary structure comprises 296 residues: uncharacterized protein (296 aa).

2 helical membrane passes run 82-102 (VVAP…WSVQ) and 117-137 (ISVL…SAIF).

The protein localises to the cell membrane. This is an uncharacterized protein from Sinorhizobium fredii (strain NBRC 101917 / NGR234).